Reading from the N-terminus, the 336-residue chain is Dihydroorotate dehydrogenase (quinone) (336 aa).

Residues 62–66 (AGLDK) and Thr86 each bind FMN. Lys66 contributes to the substrate binding site. A substrate-binding site is contributed by 111–115 (NRMGF). FMN contacts are provided by Asn139 and Asn172. Asn172 lines the substrate pocket. The active-site Nucleophile is the Ser175. Residue Asn177 coordinates substrate. FMN-binding residues include Lys217 and Thr245. 246 to 247 (NT) provides a ligand contact to substrate. FMN contacts are provided by residues Gly268, Gly297, and 318–319 (YS).

This sequence belongs to the dihydroorotate dehydrogenase family. Type 2 subfamily. Monomer. FMN serves as cofactor.

Its subcellular location is the cell membrane. It catalyses the reaction (S)-dihydroorotate + a quinone = orotate + a quinol. It participates in pyrimidine metabolism; UMP biosynthesis via de novo pathway; orotate from (S)-dihydroorotate (quinone route): step 1/1. Its function is as follows. Catalyzes the conversion of dihydroorotate to orotate with quinone as electron acceptor. The chain is Dihydroorotate dehydrogenase (quinone) from Escherichia coli O17:K52:H18 (strain UMN026 / ExPEC).